A 357-amino-acid polypeptide reads, in one-letter code: DNA replication and repair protein RecF (357 aa).

An ATP-binding site is contributed by 30–37 (GANGSGKT).

It belongs to the RecF family.

It localises to the cytoplasm. Its function is as follows. The RecF protein is involved in DNA metabolism; it is required for DNA replication and normal SOS inducibility. RecF binds preferentially to single-stranded, linear DNA. It also seems to bind ATP. This chain is DNA replication and repair protein RecF, found in Salmonella schwarzengrund (strain CVM19633).